A 238-amino-acid chain; its full sequence is MKMKRSPYCFCCSFALLLLVSFLKDRHFCSADPTDGFTEVPLTEDNFVIQKPYDKPLNDRYSYKNGIRRLWVYENDKPFKVGSPTRPRTEIRIKGHDYSSGVWQFEGQVHVPEGTSGVTVMQVFGAVNKATALQLRVYNGDLKSYKSNSVATDIYNKWLRVNVIHKVGKGEITVFINGQQKLVVNDDGPAEHYFKCGVYAAPDGSSNYMESRWKNIKLYKSDNKLEGCNNNHGTWLVQ.

An N-terminal signal peptide occupies residues Met-1–Ala-31. Residues Leu-225–Gln-238 constitute a propeptide, removed in mature form.

It localises to the vacuole. Functionally, may be a subunit of a vacuolar malate and citrate transporter. The protein is Citrate-binding protein (CBP) of Hevea brasiliensis (Para rubber tree).